Reading from the N-terminus, the 317-residue chain is Ferrochelatase (317 aa).

Residues H191 and E271 each contribute to the Fe cation site.

It belongs to the ferrochelatase family.

Its subcellular location is the cytoplasm. The catalysed reaction is heme b + 2 H(+) = protoporphyrin IX + Fe(2+). It participates in porphyrin-containing compound metabolism; protoheme biosynthesis; protoheme from protoporphyrin-IX: step 1/1. Functionally, catalyzes the ferrous insertion into protoporphyrin IX. In Thermus thermophilus (strain ATCC BAA-163 / DSM 7039 / HB27), this protein is Ferrochelatase.